Reading from the N-terminus, the 396-residue chain is Deoxyuridine 5'-triphosphate nucleotidohydrolase (396 aa).

Residues 280 to 282 (RSS) and 380 to 381 (FG) each bind substrate.

Belongs to the dUTPase family. It depends on Mg(2+) as a cofactor.

It carries out the reaction dUTP + H2O = dUMP + diphosphate + H(+). Functionally, involved in nucleotide metabolism: produces dUMP, the immediate precursor of thymidine nucleotides and decreases the intracellular concentration of dUTP to avoid uracil incorporation into viral DNA. This Varicella-zoster virus (strain Dumas) (HHV-3) protein is Deoxyuridine 5'-triphosphate nucleotidohydrolase.